Consider the following 427-residue polypeptide: Dihydroorotase (427 aa).

Positions 60 and 62 each coordinate Zn(2+). Residues 62–64 and Asn-94 each bind substrate; that span reads HLR. Zn(2+) contacts are provided by Asp-152, His-179, and His-232. Asn-278 contacts substrate. Residue Asp-305 participates in Zn(2+) binding. Residue Asp-305 is part of the active site. Substrate contacts are provided by residues His-309 and 323–324; that span reads FG.

The protein belongs to the metallo-dependent hydrolases superfamily. DHOase family. Class I DHOase subfamily. Requires Zn(2+) as cofactor.

The enzyme catalyses (S)-dihydroorotate + H2O = N-carbamoyl-L-aspartate + H(+). It functions in the pathway pyrimidine metabolism; UMP biosynthesis via de novo pathway; (S)-dihydroorotate from bicarbonate: step 3/3. Its function is as follows. Catalyzes the reversible cyclization of carbamoyl aspartate to dihydroorotate. The chain is Dihydroorotase from Bacillus caldolyticus.